The following is a 289-amino-acid chain: Ribosomal RNA small subunit methyltransferase A (289 aa).

S-adenosyl-L-methionine contacts are provided by Asn21, Leu23, Gly48, Glu69, Asp94, and Asn120.

The protein belongs to the class I-like SAM-binding methyltransferase superfamily. rRNA adenine N(6)-methyltransferase family. RsmA subfamily.

The protein localises to the cytoplasm. It carries out the reaction adenosine(1518)/adenosine(1519) in 16S rRNA + 4 S-adenosyl-L-methionine = N(6)-dimethyladenosine(1518)/N(6)-dimethyladenosine(1519) in 16S rRNA + 4 S-adenosyl-L-homocysteine + 4 H(+). In terms of biological role, specifically dimethylates two adjacent adenosines (A1518 and A1519) in the loop of a conserved hairpin near the 3'-end of 16S rRNA in the 30S particle. May play a critical role in biogenesis of 30S subunits. This Actinobacillus pleuropneumoniae serotype 3 (strain JL03) protein is Ribosomal RNA small subunit methyltransferase A.